The chain runs to 141 residues: Hemoglobin subunit alpha (141 aa).

One can recognise a Globin domain in the interval 1-141 (VLSSKDKANI…VSTVLTSKYR (141 aa)). Phosphoserine is present on serine 3. An N6-succinyllysine mark is found at lysine 7 and lysine 11. Lysine 16 is subject to N6-acetyllysine; alternate. At lysine 16 the chain carries N6-succinyllysine; alternate. A Phosphotyrosine modification is found at tyrosine 24. Lysine 40 carries the post-translational modification N6-succinyllysine. Serine 49 bears the Phosphoserine mark. Histidine 58 contributes to the O2 binding site. Histidine 87 is a binding site for heme b. Serine 102 bears the Phosphoserine mark. Residue threonine 108 is modified to Phosphothreonine. Position 124 is a phosphoserine (serine 124). 2 positions are modified to phosphothreonine: threonine 134 and threonine 137. Serine 138 is modified (phosphoserine).

This sequence belongs to the globin family. Heterotetramer of two alpha chains and two beta chains. Red blood cells.

Functionally, involved in oxygen transport from the lung to the various peripheral tissues. In terms of biological role, hemopressin acts as an antagonist peptide of the cannabinoid receptor CNR1. Hemopressin-binding efficiently blocks cannabinoid receptor CNR1 and subsequent signaling. The polypeptide is Hemoglobin subunit alpha (HBA) (Vicugna pacos (Alpaca)).